A 213-amino-acid polypeptide reads, in one-letter code: mRNA-decapping protein OPG121 (213 aa).

Positions 16 and 50 each coordinate N(7)-methyl-GTP. A Nudix hydrolase domain is found at 30 to 209; sequence KDTHVFAACI…EYLSYIYNML (180 aa). The Nudix box signature appears at 111–132; it reads GKLDKKESIKDCLRRELKEESD. Catalysis depends on glutamate 126, which acts as the Nucleophile. Mg(2+)-binding residues include glutamate 126 and glutamate 130. Aspartate 151 serves as a coordination point for N(7)-methyl-GTP. Glutamate 183 contacts Mg(2+).

The protein belongs to the Nudix hydrolase family. Mg(2+) is required as a cofactor. Requires Mn(2+) as cofactor.

It carries out the reaction a 5'-end (N(7)-methyl 5'-triphosphoguanosine)-guanosine in mRNA + H2O = a 5'-end phospho-guanosine in mRNA + N(7)-methyl-GDP + 2 H(+). Decapping enzyme that remove the protective 5'-cap from both host and viral mRNAs to commit transcripts for decay by the cellular exonuclease XRN1. Accelerates viral and cellular mRNA turnover to eliminate competing host mRNAs and allow stage-specific synthesis of viral proteins. Acceleration of the turnover of cellular transcripts may even promote the shutoff of host protein synthesis. This chain is mRNA-decapping protein OPG121 (OPG121), found in Vaccinia virus (strain Western Reserve) (VACV).